Reading from the N-terminus, the 360-residue chain is Phospho-N-acetylmuramoyl-pentapeptide-transferase (360 aa).

The next 10 helical transmembrane spans lie at 27 to 47, 70 to 90, 98 to 118, 134 to 154, 168 to 188, 199 to 219, 239 to 259, 263 to 283, 288 to 308, and 337 to 357; these read GALF…ISLL, GTPT…ILLW, VWVT…DDYL, LLLE…YSPA, TLLN…VGAG, GLAI…AYLV, LAVV…FNAP, IFMG…IAVA, IVLA…IIQV, and QVVI…LATL.

It belongs to the glycosyltransferase 4 family. MraY subfamily. Mg(2+) serves as cofactor.

It is found in the cell inner membrane. It carries out the reaction UDP-N-acetyl-alpha-D-muramoyl-L-alanyl-gamma-D-glutamyl-meso-2,6-diaminopimeloyl-D-alanyl-D-alanine + di-trans,octa-cis-undecaprenyl phosphate = di-trans,octa-cis-undecaprenyl diphospho-N-acetyl-alpha-D-muramoyl-L-alanyl-D-glutamyl-meso-2,6-diaminopimeloyl-D-alanyl-D-alanine + UMP. It functions in the pathway cell wall biogenesis; peptidoglycan biosynthesis. Functionally, catalyzes the initial step of the lipid cycle reactions in the biosynthesis of the cell wall peptidoglycan: transfers peptidoglycan precursor phospho-MurNAc-pentapeptide from UDP-MurNAc-pentapeptide onto the lipid carrier undecaprenyl phosphate, yielding undecaprenyl-pyrophosphoryl-MurNAc-pentapeptide, known as lipid I. This Methylorubrum extorquens (strain CM4 / NCIMB 13688) (Methylobacterium extorquens) protein is Phospho-N-acetylmuramoyl-pentapeptide-transferase.